A 237-amino-acid polypeptide reads, in one-letter code: Uridylate kinase (237 aa).

9–12 (KLSG) serves as a coordination point for ATP. Residue G51 participates in UMP binding. Positions 52 and 56 each coordinate ATP. Residues D71 and 132 to 139 (CGNPFFTT) contribute to the UMP site. T159, Y165, and D168 together coordinate ATP.

This sequence belongs to the UMP kinase family. In terms of assembly, homohexamer.

It localises to the cytoplasm. It carries out the reaction UMP + ATP = UDP + ADP. It participates in pyrimidine metabolism; CTP biosynthesis via de novo pathway; UDP from UMP (UMPK route): step 1/1. Its activity is regulated as follows. Inhibited by UTP. Catalyzes the reversible phosphorylation of UMP to UDP. The polypeptide is Uridylate kinase (Prochlorococcus marinus (strain MIT 9313)).